The sequence spans 137 residues: 3-hydroxyacyl-[acyl-carrier-protein] dehydratase FabZ (137 aa).

Residue His-46 is part of the active site.

This sequence belongs to the thioester dehydratase family. FabZ subfamily.

It is found in the cytoplasm. It carries out the reaction a (3R)-hydroxyacyl-[ACP] = a (2E)-enoyl-[ACP] + H2O. Its function is as follows. Involved in unsaturated fatty acids biosynthesis. Catalyzes the dehydration of short chain beta-hydroxyacyl-ACPs and long chain saturated and unsaturated beta-hydroxyacyl-ACPs. The protein is 3-hydroxyacyl-[acyl-carrier-protein] dehydratase FabZ of Thermotoga neapolitana (strain ATCC 49049 / DSM 4359 / NBRC 107923 / NS-E).